The following is a 527-amino-acid chain: Cytochrome P450 monooxygenase aba2 (527 aa).

A helical membrane pass occupies residues 26-46 (TTVAVLVTVALIAQVLWKIFF). Residues Asn-189, Asn-420, and Asn-448 are each glycosylated (N-linked (GlcNAc...) asparagine). Position 460 (Cys-460) interacts with heme. An N-linked (GlcNAc...) asparagine glycan is attached at Asn-464.

This sequence belongs to the cytochrome P450 family. Heme is required as a cofactor.

Its subcellular location is the membrane. The protein operates within hormone biosynthesis. In terms of biological role, cytochrome P450 monooxygenase; part of the gene cluster that mediates the biosynthesis of abscisic acid (ABA), a phytohormone that acts antagonistically toward salicylic acid (SA), jasmonic acid (JA) and ethylene (ETH) signaling, to impede plant defense responses. The first step of the pathway catalyzes the reaction from farnesyl diphosphate to alpha-ionylideneethane performed by the alpha-ionylideneethane synthase aba3 via a three-step reaction mechanism involving 2 neutral intermediates, beta-farnesene and allofarnesene. The cytochrome P450 monooxygenase aba1 might then be involved in the conversion of alpha-ionylideneethane to alpha-ionylideneacetic acid. Alpha-ionylideneacetic acid is further converted to abscisic acid in 2 steps involving the cytochrome P450 monooxygenase aba2 and the short-chain dehydrogenase/reductase aba4, via the intermediates 1'-deoxy-ABA or 1',4'-trans-diol-ABA, depending on the order of action of these 2 enzymes. Aba2 is responsible for the hydroxylation of carbon atom C-1' and aba4 might be involved in the oxidation of the C-4' carbon atom. The sequence is that of Cytochrome P450 monooxygenase aba2 (aba2) from Botryotinia fuckeliana (strain B05.10) (Noble rot fungus).